The following is a 653-amino-acid chain: Endoglin (653 aa).

An N-terminal signal peptide occupies residues Met-1–Gly-24. Residues Leu-25 to Gly-581 are Extracellular-facing. An OR1, N-terminal part region spans residues Glu-27–Thr-44. A required for interaction with GDF2 region spans residues Glu-27–Ser-336. Disulfide bonds link Cys-31-Cys-206, Cys-51-Cys-181, Cys-241-Cys-329, Cys-349-Cys-381, Cys-362-Cys-442, Cys-393-Cys-411, and Cys-493-Cys-549. An OR2 region spans residues Ser-45 to His-198. An N-linked (GlcNAc...) asparagine glycan is attached at Asn-57. Residues Thr-199–Cys-329 are OR1, C-terminal part. The tract at residues Lys-269–Phe-281 is essential for interaction with GDF2. Asn-306 carries N-linked (GlcNAc...) asparagine glycosylation. In terms of domain architecture, ZP spans Cys-362–Ala-512. A helical membrane pass occupies residues Leu-582–Trp-606. Residues Tyr-607–Ala-653 are Cytoplasmic-facing. Residues Ala-625–Ser-634 show a composition bias toward low complexity. Residues Ala-625 to Ala-653 are disordered. The span at Thr-635–Ala-653 shows a compositional bias: polar residues. A phosphoserine; by TGFBR1 mark is found at Ser-641 and Ser-644.

Homodimer; disulfide-linked. Forms a heteromeric complex with the signaling receptors for transforming growth factor-beta: TGFBR1 and/or TGFBR2. It is able to bind TGFB1 and TGFB2 with high affinity, but not TGFB3. Interacts with GDF2, forming a heterotetramer with a 2:2 stoichiometry. Interacts with ACVRL1. Can form a heteromeric complex with GDF2 and ACVRL1. Interacts with BMP10. Interacts with DYNLT4. Interacts with ARRB2.

It localises to the cell membrane. Its function is as follows. Vascular endothelium glycoprotein that plays an important role in the regulation of angiogenesis. Required for normal structure and integrity of adult vasculature. Regulates the migration of vascular endothelial cells. Required for normal extraembryonic angiogenesis and for embryonic heart development. May regulate endothelial cell shape changes in response to blood flow, which drive vascular remodeling and establishment of normal vascular morphology during angiogenesis. May play a role in the binding of endothelial cells to integrins. Acts as a TGF-beta coreceptor and is involved in the TGF-beta/BMP signaling cascade that ultimately leads to the activation of SMAD transcription factors. Required for GDF2/BMP9 signaling through SMAD1 in endothelial cells and modulates TGFB1 signaling through SMAD3. The protein is Endoglin (ENG) of Sus scrofa (Pig).